Consider the following 114-residue polypeptide: Ig kappa chain V-I region S107A (114 aa).

Residues 1 to 23 are framework-1; it reads DIVMTQSPTFLAVTASKKVTISC. C23 and C94 are joined by a disulfide. The complementarity-determining-1 stretch occupies residues 24 to 40; the sequence is TASESLYSSKHKVHYLA. A framework-2 region spans residues 41–55; the sequence is WYQKKPEQSPKLLIY. Residues 56–62 are complementarity-determining-2; that stretch reads GASNRYI. Residues 63 to 94 are framework-3; it reads GVPDRFTGSGSGTDFTLTISSVQVEDLTHYYC. The interval 95–103 is complementarity-determining-3; sequence AQFYSYPLT. A framework-4 region spans residues 104 to 113; the sequence is FGAGTKLELK.

Its function is as follows. Anti-phosphocholine antibody. This chain is Ig kappa chain V-I region S107A (Igkv7-33), found in Mus musculus (Mouse).